A 405-amino-acid chain; its full sequence is uncharacterized protein (405 aa).

3 disordered regions span residues 1–21 (MSKK…ESKT), 150–179 (IKDE…QEGP), and 285–405 (DDED…KSRS). Residues 7-16 (KNASPKNNSD) show a composition bias toward polar residues. Acidic residues-rich tracts occupy residues 312-331 (SDDE…DDEE) and 349-358 (DDEDDEEEGE). 2 stretches are compositionally biased toward basic residues: residues 365 to 374 (SSKKSSKKAS) and 390 to 405 (PKKK…KSRS).

This is an uncharacterized protein from Acanthamoeba polyphaga (Amoeba).